We begin with the raw amino-acid sequence, 263 residues long: Transmembrane protein 176B (263 aa).

Transmembrane regions (helical) follow at residues 61–81, 89–109, 121–141, and 197–217; these read LGVT…CLYF, AFGC…GTIV, VSCL…VLGV, and LFLA…VVSV. Phosphoserine is present on residues Ser-231, Ser-240, and Ser-253. A disordered region spans residues 239-263; sequence ESERKLLDGHPAPASPAKEKIPAIL.

It belongs to the TMEM176 family. In terms of tissue distribution, ubiquitously expressed with higher expression in lung, liver, kidney and colon. Expressed in cerebellar granule cells.

It localises to the nucleus membrane. Its function is as follows. May play a role in the process of maturation of dendritic cells. Required for the development of cerebellar granule cells. The sequence is that of Transmembrane protein 176B (Tmem176b) from Mus musculus (Mouse).